The following is a 1563-amino-acid chain: Ribulose bisphosphate carboxylase (1563 aa).

The substrate site is built by H32 and S79. Residues 197 to 217 (LAAAFVGASTTRKASSVARRA) constitute a propeptide, linker. Residue N328 coordinates substrate. K383 serves as the catalytic Proton acceptor. Residue K385 participates in substrate binding. The Mg(2+) site is built by K408, D410, and E411. K408 is modified (N6-carboxylysine). H504 acts as the Proton acceptor in catalysis. Positions 505, 538, and 585 each coordinate substrate. Positions 703-723 (LAAAFVGASTTRKASSVARRA) are cleaved as a propeptide — linker. A substrate-binding site is contributed by N834. K889 functions as the Proton acceptor in the catalytic mechanism. K891 serves as a coordination point for substrate. Mg(2+) is bound by residues K914, D916, and E917. K914 bears the N6-carboxylysine mark. Residue H1010 is the Proton acceptor of the active site. R1011, H1044, and S1091 together coordinate substrate. Positions 1209–1229 (LAAAFVGASTTRKASSVARRA) are cleaved as a propeptide — linker. Residue N1340 participates in substrate binding. K1395 serves as the catalytic Proton acceptor. K1397 is a binding site for substrate. Residues K1420, D1422, and E1423 each coordinate Mg(2+). At K1420 the chain carries N6-carboxylysine. The active-site Proton acceptor is the H1516. R1517 and H1550 together coordinate substrate.

This sequence belongs to the RuBisCO large chain family. Type II subfamily. As to quaternary structure, homodimer. Mg(2+) is required as a cofactor. In terms of processing, in Western blots an approximately 220 kDa polyprotein and 2 smaller proteins of about 55 and 52 kDa are detected, suggesting the polyprotein may be cleaved at one end of the linker and then at the other end to give mature RuBisCO.

It is found in the plastid. It localises to the chloroplast. It catalyses the reaction 2 (2R)-3-phosphoglycerate + 2 H(+) = D-ribulose 1,5-bisphosphate + CO2 + H2O. The enzyme catalyses D-ribulose 1,5-bisphosphate + O2 = 2-phosphoglycolate + (2R)-3-phosphoglycerate + 2 H(+). RuBisCO catalyzes two reactions: the carboxylation of D-ribulose 1,5-bisphosphate, the primary event in carbon dioxide fixation, as well as the oxidative fragmentation of the pentose substrate. Both reactions occur simultaneously and in competition at the same active site. This is Ribulose bisphosphate carboxylase (rbcL) from Prorocentrum minimum (Dinoflagellate).